The primary structure comprises 670 residues: DNA ligase (670 aa).

NAD(+) contacts are provided by residues 33–37, 82–83, and Glu114; these read DAEYD and SL. Lys116 functions as the N6-AMP-lysine intermediate in the catalytic mechanism. Arg137, Glu173, Lys291, and Lys315 together coordinate NAD(+). 4 residues coordinate Zn(2+): Cys409, Cys412, Cys427, and Cys433. Residues 592–670 enclose the BRCT domain; that stretch reads VQSDRLSGNT…ENALAELLSD (79 aa).

The protein belongs to the NAD-dependent DNA ligase family. LigA subfamily. It depends on Mg(2+) as a cofactor. Mn(2+) is required as a cofactor.

The enzyme catalyses NAD(+) + (deoxyribonucleotide)n-3'-hydroxyl + 5'-phospho-(deoxyribonucleotide)m = (deoxyribonucleotide)n+m + AMP + beta-nicotinamide D-nucleotide.. Functionally, DNA ligase that catalyzes the formation of phosphodiester linkages between 5'-phosphoryl and 3'-hydroxyl groups in double-stranded DNA using NAD as a coenzyme and as the energy source for the reaction. It is essential for DNA replication and repair of damaged DNA. This is DNA ligase from Idiomarina loihiensis (strain ATCC BAA-735 / DSM 15497 / L2-TR).